We begin with the raw amino-acid sequence, 213 residues long: Putative glutathione-dependent formaldehyde-activating enzyme (213 aa).

One can recognise a CENP-V/GFA domain in the interval 19–165; the sequence is FPGGTLKCLC…FRELGLETYD (147 aa). Residues cysteine 26, cysteine 28, cysteine 47, cysteine 49, cysteine 52, cysteine 94, and cysteine 97 each coordinate Zn(2+).

The protein belongs to the Gfa family. Requires Zn(2+) as cofactor.

It carries out the reaction S-(hydroxymethyl)glutathione = glutathione + formaldehyde. It functions in the pathway one-carbon metabolism; formaldehyde degradation; formate from formaldehyde (glutathione route): step 1/3. Its function is as follows. Catalyzes the condensation of formaldehyde and glutathione to S-hydroxymethylglutathione. This chain is Putative glutathione-dependent formaldehyde-activating enzyme, found in Podospora anserina (strain S / ATCC MYA-4624 / DSM 980 / FGSC 10383) (Pleurage anserina).